A 224-amino-acid polypeptide reads, in one-letter code: Iron-sulfur cluster repair protein ScdA (224 aa).

This sequence belongs to the RIC family. ScdA subfamily. In terms of assembly, homodimer.

It is found in the cytoplasm. Functionally, di-iron-containing protein involved in the repair of iron-sulfur clusters damaged by oxidative and nitrosative stress conditions. This chain is Iron-sulfur cluster repair protein ScdA, found in Staphylococcus epidermidis (strain ATCC 35984 / DSM 28319 / BCRC 17069 / CCUG 31568 / BM 3577 / RP62A).